Here is a 455-residue protein sequence, read N- to C-terminus: MNLIRFLLVFQGKIQMNESRKKLNCQSRQFNVDKISDLPEDLLVHILSLLPTTNDIVATSGVSKRWESLWTKVHKLRFNDRIYDGKRYDSFLHFVEKSLILHKAPTLVSLRLSVGPKCTADDIGLWIKLALDRNICELIIKHYPDHGHIRLSRRLCDSKTLVSLKLKNAILGAIWLPTCFISLKTLHLRYVKYSGDESVRTLISSCPSLRNLVVKRHNEDNVKRFAIIVRYLQSLTVYLSPLHGVADSDAYVINTPNLKYLNIKDHYTDLCSFEDMPYLDEANLDVAFTHTENFFESLTSVKKLSLCLKKSNAQYPEGIIFSQLDHLELCTCDDSKWLNILAMLLPDSPKLRVLKLNDKNHDFVDKYCSCTWNQQPSYVPECLTKSLEIFEWRNYKATFRERDVAVYILKNSTCLKKTVISPKLKISGEICDHHIIREDLASLFMGSSSCELKFD.

Positions 32 to 81 constitute an F-box domain; that stretch reads VDKISDLPEDLLVHILSLLPTTNDIVATSGVSKRWESLWTKVHKLRFNDR. One can recognise an FBD domain in the interval 372–421; the sequence is WNQQPSYVPECLTKSLEIFEWRNYKATFRERDVAVYILKNSTCLKKTVIS.

This Arabidopsis thaliana (Mouse-ear cress) protein is Putative FBD-associated F-box protein At5g56400.